A 194-amino-acid polypeptide reads, in one-letter code: 7-methyl-GTP pyrophosphatase (194 aa).

Aspartate 71 (proton acceptor) is an active-site residue.

This sequence belongs to the Maf family. YceF subfamily. It depends on a divalent metal cation as a cofactor.

It is found in the cytoplasm. It catalyses the reaction N(7)-methyl-GTP + H2O = N(7)-methyl-GMP + diphosphate + H(+). In terms of biological role, nucleoside triphosphate pyrophosphatase that hydrolyzes 7-methyl-GTP (m(7)GTP). May have a dual role in cell division arrest and in preventing the incorporation of modified nucleotides into cellular nucleic acids. The polypeptide is 7-methyl-GTP pyrophosphatase (Aromatoleum aromaticum (strain DSM 19018 / LMG 30748 / EbN1) (Azoarcus sp. (strain EbN1))).